The primary structure comprises 437 residues: MKLLVIGSGGREHALAWKLAHSRRVSEIIVAPGNAGTATETKCRNAPVKVTDLDGLLALAQREAVNITVVGPEVPLVAGIVDCFRAAGMRIFGPTAAAAQLEGSKAYAKDFLARHGIPTARYAVHTNVDAAISDVRQQGAPIVIKADGLAAGKGVIVAMTVTEAEAAIRDMLSGNAFGHAGARVVIEEYLDGEEASFISMVDGTHALPMATSQDHKRVSDGDIGPNTGGMGAYSPAPIITDEIHARVMREIVNPTVTGMIADGTPFMGFLYAGLMIDVHGAPKVIEFNVRFGDPETQPMMMRLQSDLLDLIEAALNGDLDKVQAQWDPRPSLGVVMAARPYPKAPITGEIISGLDALPANVKVFHAGTALDAAGCVVTAGGRVLCVTALGSNVSEAQRHAYAGVASLHWANAFQRSDIGWRAIMREHTVTLNVHGPV.

Residues 109-316 enclose the ATP-grasp domain; it reads KDFLARHGIP…LLDLIEAALN (208 aa). Position 135–196 (135–196) interacts with ATP; that stretch reads VRQQGAPIVI…EEYLDGEEAS (62 aa). Mg(2+) contacts are provided by E286 and N288.

It belongs to the GARS family. The cofactor is Mg(2+). Mn(2+) is required as a cofactor.

It carries out the reaction 5-phospho-beta-D-ribosylamine + glycine + ATP = N(1)-(5-phospho-beta-D-ribosyl)glycinamide + ADP + phosphate + H(+). It functions in the pathway purine metabolism; IMP biosynthesis via de novo pathway; N(1)-(5-phospho-D-ribosyl)glycinamide from 5-phospho-alpha-D-ribose 1-diphosphate: step 2/2. The protein is Phosphoribosylamine--glycine ligase of Xylella fastidiosa (strain 9a5c).